We begin with the raw amino-acid sequence, 48 residues long: DNA-directed RNA polymerase subunit Rpo12 (48 aa).

Zn(2+) is bound by residues Cys-9, Cys-26, and Cys-29.

The protein belongs to the archaeal Rpo12/eukaryotic RPC10 RNA polymerase subunit family. In terms of assembly, part of the RNA polymerase complex. Zn(2+) serves as cofactor.

The protein localises to the cytoplasm. It catalyses the reaction RNA(n) + a ribonucleoside 5'-triphosphate = RNA(n+1) + diphosphate. In terms of biological role, DNA-dependent RNA polymerase (RNAP) catalyzes the transcription of DNA into RNA using the four ribonucleoside triphosphates as substrates. The protein is DNA-directed RNA polymerase subunit Rpo12 of Sulfurisphaera tokodaii (strain DSM 16993 / JCM 10545 / NBRC 100140 / 7) (Sulfolobus tokodaii).